The chain runs to 69 residues: Small cysteine-rich protein (69 aa).

An N-terminal signal peptide occupies residues 1–19; it reads MKLQLCLVLLLLGVLYVQS. A propeptide spanning residues 20–22 is cleaved from the precursor; sequence VPE.

Belongs to the Cnidaria small cysteine-rich protein (SCRiP) family. delta subfamily. In terms of processing, contains 4 disulfide bonds.

It is found in the secreted. The protein resides in the nematocyst. Its function is as follows. Induces neurotoxic symptoms on zebrafish. Has also been claimed to be implied in calcification, but this function seems improbable. The chain is Small cysteine-rich protein from Metridium senile (Brown sea anemone).